The chain runs to 306 residues: Ubiquitin-conjugating enzyme E2Q-like protein CG4502 (306 aa).

The interval 18-77 is disordered; that stretch reads HKSSNNNNNNNNNHNNNINNNNNNDKVDGATGSSPNINNNNNNNNNNNNHDGAAAPSSAG. 2 stretches are compositionally biased toward low complexity: residues 22 to 41 and 53 to 77; these read NNNN…NNNN and NINN…SSAG. Residues 138–299 enclose the UBC core domain; it reads IRTRRLMKEY…VKTHEKYGWV (162 aa). The active-site Glycyl thioester intermediate is Cys234.

Belongs to the ubiquitin-conjugating enzyme family.

The enzyme catalyses S-ubiquitinyl-[E1 ubiquitin-activating enzyme]-L-cysteine + [E2 ubiquitin-conjugating enzyme]-L-cysteine = [E1 ubiquitin-activating enzyme]-L-cysteine + S-ubiquitinyl-[E2 ubiquitin-conjugating enzyme]-L-cysteine.. The protein operates within protein modification; protein ubiquitination. Catalyzes the covalent attachment of ubiquitin to other proteins. This is Ubiquitin-conjugating enzyme E2Q-like protein CG4502 from Drosophila melanogaster (Fruit fly).